The sequence spans 435 residues: Methylenetetrahydrofolate--tRNA-(uracil-5-)-methyltransferase TrmFO (435 aa).

G10–G15 contacts FAD.

Belongs to the MnmG family. TrmFO subfamily. It depends on FAD as a cofactor.

It is found in the cytoplasm. It carries out the reaction uridine(54) in tRNA + (6R)-5,10-methylene-5,6,7,8-tetrahydrofolate + NADH + H(+) = 5-methyluridine(54) in tRNA + (6S)-5,6,7,8-tetrahydrofolate + NAD(+). It catalyses the reaction uridine(54) in tRNA + (6R)-5,10-methylene-5,6,7,8-tetrahydrofolate + NADPH + H(+) = 5-methyluridine(54) in tRNA + (6S)-5,6,7,8-tetrahydrofolate + NADP(+). In terms of biological role, catalyzes the folate-dependent formation of 5-methyl-uridine at position 54 (M-5-U54) in all tRNAs. The protein is Methylenetetrahydrofolate--tRNA-(uracil-5-)-methyltransferase TrmFO of Halalkalibacterium halodurans (strain ATCC BAA-125 / DSM 18197 / FERM 7344 / JCM 9153 / C-125) (Bacillus halodurans).